We begin with the raw amino-acid sequence, 255 residues long: Malonyl-[acyl-carrier protein] O-methyltransferase (255 aa).

It belongs to the methyltransferase superfamily.

It catalyses the reaction malonyl-[ACP] + S-adenosyl-L-methionine = malonyl-[ACP] methyl ester + S-adenosyl-L-homocysteine. Its pathway is cofactor biosynthesis; biotin biosynthesis. In terms of biological role, converts the free carboxyl group of a malonyl-thioester to its methyl ester by transfer of a methyl group from S-adenosyl-L-methionine (SAM). It allows to synthesize pimeloyl-ACP via the fatty acid synthetic pathway. This chain is Malonyl-[acyl-carrier protein] O-methyltransferase, found in Serratia marcescens.